Consider the following 145-residue polypeptide: 3-hydroxyacyl-[acyl-carrier-protein] dehydratase FabZ (145 aa).

The active site involves histidine 49.

The protein belongs to the thioester dehydratase family. FabZ subfamily.

It localises to the cytoplasm. It carries out the reaction a (3R)-hydroxyacyl-[ACP] = a (2E)-enoyl-[ACP] + H2O. Its function is as follows. Involved in unsaturated fatty acids biosynthesis. Catalyzes the dehydration of short chain beta-hydroxyacyl-ACPs and long chain saturated and unsaturated beta-hydroxyacyl-ACPs. This Ehrlichia ruminantium (strain Gardel) protein is 3-hydroxyacyl-[acyl-carrier-protein] dehydratase FabZ.